Reading from the N-terminus, the 597-residue chain is Membrane protein insertase YidC (597 aa).

The helical transmembrane segment at 8–28 (YFVAIALSVLILIAWQFFYVS) threads the bilayer. Positions 38-75 (AEKAQQAQSQPGTQQAAPGQAAPGQALPGGAIPSAAES) are disordered. Low complexity predominate over residues 41-70 (AQQAQSQPGTQQAAPGQAAPGQALPGGAIP). 4 helical membrane passes run 372 to 392 (LFGNFGIAILITTIVVKLIFF), 446 to 466 (WPILIQIPVFFALYKVIYVTI), 491 to 511 (LFGLLPFEGPAFLHLGIWPIV), and 535 to 555 (FTWMPVVFTFMLASFPAGLVI).

The protein belongs to the OXA1/ALB3/YidC family. Type 1 subfamily. Interacts with the Sec translocase complex via SecD. Specifically interacts with transmembrane segments of nascent integral membrane proteins during membrane integration.

It localises to the cell inner membrane. Required for the insertion and/or proper folding and/or complex formation of integral membrane proteins into the membrane. Involved in integration of membrane proteins that insert both dependently and independently of the Sec translocase complex, as well as at least some lipoproteins. Aids folding of multispanning membrane proteins. The polypeptide is Membrane protein insertase YidC (Sinorhizobium medicae (strain WSM419) (Ensifer medicae)).